Here is a 637-residue protein sequence, read N- to C-terminus: ATP-dependent zinc metalloprotease FtsH (637 aa).

Over 1 to 44 (MAKHSQHSSPPRKLFDTLNDLWQRAKSEAGLSAEGPEGTRRRNN) the chain is Cytoplasmic. The chain crosses the membrane as a helical span at residues 45–65 (LILYLLLVLSTLYLLNGYQTL). Over 66-141 (RNEEIPYSEF…TVRYGSNWFS (76 aa)) the chain is Periplasmic. A helical transmembrane segment spans residues 142 to 162 (SLIFNWIVPIVLLTLFWTWMA). At 163–637 (RRMTGGRGFL…VKAVIREAAS (475 aa)) the chain is on the cytoplasmic side. Position 231 to 238 (231 to 238 (GPPGTGKT)) interacts with ATP. H454 serves as a coordination point for Zn(2+). E455 is an active-site residue. H458 and D531 together coordinate Zn(2+).

In the central section; belongs to the AAA ATPase family. It in the C-terminal section; belongs to the peptidase M41 family. As to quaternary structure, homohexamer. It depends on Zn(2+) as a cofactor.

It localises to the cell inner membrane. Functionally, acts as a processive, ATP-dependent zinc metallopeptidase for both cytoplasmic and membrane proteins. Plays a role in the quality control of integral membrane proteins. The chain is ATP-dependent zinc metalloprotease FtsH from Methylococcus capsulatus (strain ATCC 33009 / NCIMB 11132 / Bath).